Here is a 300-residue protein sequence, read N- to C-terminus: MSLVNGRRRTAASVVALTAALTALAALCAPAQAQDTKATSKAAEAAKPDAGTLRVCAAEQPPLSMKDGSGLENRIATTVAEAMGRKAQFVWLGKPAIYLVRDGLEKKTCDVVIGLDADDPRVLTSKPYYRSGYVFLTRADKDLDIKSWSDPRLKEVSHMVVGFGTPGEAMLKDIGRYEEDMAYLYSLVNFRAPRNQYTQIDPARMVSEVATGKAEVGVAFGPDVARYVRDSSTKLRMTPVPDDTQASDGRKMPQSFDQAMGVRKDDTALKAEIDAALEKAKPKIEAILKEEGVPVLPVSN.

The N-terminal stretch at 1 to 25 (MSLVNGRRRTAASVVALTAALTALA) is a signal peptide.

Its subcellular location is the periplasm. Functionally, may be involved in the assemblage of active methanol dehydrogenase and/or its cofactor PQQ in the periplasm. The protein is Protein MoxJ (moxJ) of Methylorubrum extorquens (strain ATCC 14718 / DSM 1338 / JCM 2805 / NCIMB 9133 / AM1) (Methylobacterium extorquens).